We begin with the raw amino-acid sequence, 524 residues long: Solute carrier family 2, facilitated glucose transporter member 2 (524 aa).

The Cytoplasmic segment spans residues 1–6 (MTEDKI). The chain crosses the membrane as a helical span at residues 7–26 (TGTLVFAVLTAVLGSFQFGY). Over 27–89 (DIGVINAPQQ…SWAEEETTAS (63 aa)) the chain is Extracellular. A glycan (N-linked (GlcNAc...) asparagine) is linked at Asn62. Residues 90–115 (ASLIIMLWSLSVSIFAIGGMIASFFG) traverse the membrane as a helical segment. Over 116–126 (GMLGDRLGRIK) the chain is Cytoplasmic. A helical membrane pass occupies residues 127–145 (AMLVANILSLVGALLMWFS). Over 146-150 (KLGPS) the chain is Extracellular. Residues 151–176 (HILIISGRGISGLYCGLISGLVPMYI) form a helical membrane-spanning segment. Residues 177–187 (GEIAPTKFRGA) lie on the Cytoplasmic side of the membrane. Residues 188–211 (IGALHQLAIVTGILVSQIIGLDFL) traverse the membrane as a helical segment. Gln193 is a D-glucose binding site. Residues 212 to 216 (LGNHE) lie on the Extracellular side of the membrane. Residues 217–239 (LWHILLGLSAVPAVLQSLMLFFC) form a helical membrane-spanning segment. Over 240 to 303 (PESPRYLYIK…LFTNSSYRQP (64 aa)) the chain is Cytoplasmic. A helical transmembrane segment spans residues 304–327 (ILVALMLHMAQQFSGINGIFYYST). D-glucose-binding positions include 314 to 315 (QQ) and Asn320. Residues 328 to 338 (SIFQTAGISQP) lie on the Extracellular side of the membrane. Residues 339-360 (VYATIGVGAINTIFTALSVFLV) form a helical membrane-spanning segment. Asn349 serves as a coordination point for D-glucose. At 361-366 (EKAGRR) the chain is on the cytoplasmic side. A helical transmembrane segment spans residues 367-389 (SLFLIGMSGMFVCAIFMSVGLVL). At 390–394 (LDKLP) the chain is on the extracellular side. The chain crosses the membrane as a helical span at residues 395 to 413 (WMSYVSMTAIFLFVSFFEI). Positions 412 and 420 each coordinate D-glucose. Over 414-433 (GPGPIPWFMVAEFFSQGPRP) the chain is Cytoplasmic. A helical membrane pass occupies residues 434 to 458 (AALAMAAFSNWTCNFIIALCFQYIA). Residues 459 to 463 (DFCGP) lie on the Extracellular side of the membrane. The chain crosses the membrane as a helical span at residues 464–482 (YVFFLFAGVVLVFTLFTFF). The Cytoplasmic portion of the chain corresponds to 483 to 524 (KVPETKGKSFEEIAAEFQKKSGSAQSPKAAVEMEFLGATETV). Thr523 carries the post-translational modification Phosphothreonine.

It belongs to the major facilitator superfamily. Sugar transporter (TC 2.A.1.1) family. Glucose transporter subfamily. In terms of processing, N-glycosylated; required for stability and retention at the cell surface of pancreatic beta cells.

It is found in the cell membrane. It carries out the reaction D-glucose(out) = D-glucose(in). The enzyme catalyses D-fructose(out) = D-fructose(in). It catalyses the reaction L-dehydroascorbate(out) = L-dehydroascorbate(in). The catalysed reaction is D-galactose(in) = D-galactose(out). With respect to regulation, D-glucose and maltose competitively inhibit fructose transport. D-glucose, D-fructose and maltose inhibit deoxyglucose transport. Functionally, facilitative hexose transporter that mediates the transport of glucose, fructose and galactose. Likely mediates the bidirectional transfer of glucose across the plasma membrane of hepatocytes and is responsible for uptake of glucose by the beta cells; may comprise part of the glucose-sensing mechanism of the beta cell. May also participate with the Na(+)/glucose cotransporter in the transcellular transport of glucose in the small intestine and kidney. Also able to mediate the transport of dehydroascorbate. The chain is Solute carrier family 2, facilitated glucose transporter member 2 from Sus scrofa (Pig).